The chain runs to 40 residues: Protein 4.1 (40 aa).

The polypeptide is Protein 4.1 (Escherichia phage T7 (Bacteriophage T7)).